Consider the following 512-residue polypeptide: Glutathione-binding protein GsiB (512 aa).

The N-terminal stretch at Met1–Ala26 is a signal peptide.

This sequence belongs to the bacterial solute-binding protein 5 family. The complex is composed of two ATP-binding proteins (GsiA), two transmembrane proteins (GsiC and GsiD) and a solute-binding protein (GsiB).

It localises to the periplasm. Its function is as follows. Part of the ABC transporter complex GsiABCD involved in glutathione import. Binds glutathione. This Shigella flexneri protein is Glutathione-binding protein GsiB.